A 477-amino-acid polypeptide reads, in one-letter code: Glycogen synthase (477 aa).

Position 15 (Lys15) interacts with ADP-alpha-D-glucose.

Belongs to the glycosyltransferase 1 family. Bacterial/plant glycogen synthase subfamily.

The catalysed reaction is [(1-&gt;4)-alpha-D-glucosyl](n) + ADP-alpha-D-glucose = [(1-&gt;4)-alpha-D-glucosyl](n+1) + ADP + H(+). It functions in the pathway glycan biosynthesis; glycogen biosynthesis. In terms of biological role, synthesizes alpha-1,4-glucan chains using ADP-glucose. This Streptococcus pneumoniae serotype 19F (strain G54) protein is Glycogen synthase.